We begin with the raw amino-acid sequence, 770 residues long: Endothelin-converting enzyme 1 (770 aa).

The Cytoplasmic portion of the chain corresponds to 1–68 (MRGVWPPPVS…WAARTQVEKR (68 aa)). Thr25 carries the phosphothreonine modification. Residues 69–89 (LVVLVVLLAAGLVACLAALGI) form a helical; Signal-anchor for type II membrane protein membrane-spanning segment. Topologically, residues 90 to 770 (QYQTRSPSVC…MNPPHKCEVW (681 aa)) are extracellular. Positions 98 to 770 (VCLSEACVSV…MNPPHKCEVW (673 aa)) constitute a Peptidase M13 domain. 5 disulfide bridges follow: Cys99-Cys104, Cys122-Cys755, Cys130-Cys715, Cys185-Cys435, and Cys644-Cys767. N-linked (GlcNAc...) asparagine glycans are attached at residues Asn166, Asn187, Asn210, Asn270, Asn316, Asn362, Asn383, and Asn539. His607 is a binding site for Zn(2+). Glu608 is a catalytic residue. His611 is a binding site for Zn(2+). Residues Asn632 and Asn651 are each glycosylated (N-linked (GlcNAc...) asparagine). Glu667 is a binding site for Zn(2+). The active-site Proton donor is Asp671.

The protein belongs to the peptidase M13 family. As to quaternary structure, homodimer; disulfide-linked. Interacts with PPP1R16B. Interacts with TSPAN8; this interaction recruits the endothelin converting enzyme ECE1 to tetraspanin-enriched microdomains and positively modulates its enzymatic activity. The cofactor is Zn(2+). In terms of tissue distribution, all isoforms are expressed in umbilical vein endothelial cells, polynuclear neutrophils, fibroblasts, atrium cardiomyocytes and ventricles. Isoforms A, B and C are also expressed in placenta, lung, heart, adrenal gland and phaeochromocytoma; isoforms A and C in liver, testis and small intestine; isoform B, C and D in endothelial cells and umbilical vein smooth muscle cells; isoforms C and D in saphenous vein cells, and isoform C in kidney.

It localises to the cell membrane. The enzyme catalyses Hydrolysis of the 21-Trp-|-Val-22 bond in big endothelin to form endothelin 1.. Inhibited by phosphoramidon. Activated by K49-P1-20, a twenty-residue synthetic peptide shortened from the snake B.asper myotoxin II. Functionally, converts big endothelin-1 to endothelin-1. The chain is Endothelin-converting enzyme 1 (ECE1) from Homo sapiens (Human).